The following is a 100-amino-acid chain: Urease subunit gamma (100 aa).

The protein belongs to the urease gamma subunit family. Heterotrimer of UreA (gamma), UreB (beta) and UreC (alpha) subunits. Three heterotrimers associate to form the active enzyme.

Its subcellular location is the cytoplasm. It carries out the reaction urea + 2 H2O + H(+) = hydrogencarbonate + 2 NH4(+). The protein operates within nitrogen metabolism; urea degradation; CO(2) and NH(3) from urea (urease route): step 1/1. This chain is Urease subunit gamma, found in Nostoc punctiforme (strain ATCC 29133 / PCC 73102).